Here is a 367-residue protein sequence, read N- to C-terminus: DNA polymerase IV (367 aa).

The region spanning 14-198 is the UmuC domain; sequence IIHIDMDAFF…LPIAKFHGVG (185 aa). Positions 18 and 116 each coordinate Mg(2+). Residue Glu-117 is part of the active site.

Belongs to the DNA polymerase type-Y family. As to quaternary structure, monomer. The cofactor is Mg(2+).

It localises to the cytoplasm. It carries out the reaction DNA(n) + a 2'-deoxyribonucleoside 5'-triphosphate = DNA(n+1) + diphosphate. Poorly processive, error-prone DNA polymerase involved in untargeted mutagenesis. Copies undamaged DNA at stalled replication forks, which arise in vivo from mismatched or misaligned primer ends. These misaligned primers can be extended by PolIV. Exhibits no 3'-5' exonuclease (proofreading) activity. May be involved in translesional synthesis, in conjunction with the beta clamp from PolIII. In Streptococcus thermophilus (strain ATCC BAA-491 / LMD-9), this protein is DNA polymerase IV.